Reading from the N-terminus, the 145-residue chain is Small ribosomal subunit protein uS17c (145 aa).

A chloroplast-targeting transit peptide spans 1-36; sequence MLLTTPFVSSPVRVQGNGGSGASPWAGAATALRIQA. Positions 101–145 are disordered; that stretch reads KTKHFLAVPLPPRDTRRKSQLLPPLQSQSQSQDQDQPPTPPPSSD. The span at 120-136 shows a compositional bias: low complexity; the sequence is QLLPPLQSQSQSQDQDQ.

This sequence belongs to the universal ribosomal protein uS17 family. As to quaternary structure, part of the 30S ribosomal subunit.

The protein resides in the plastid. It localises to the chloroplast. Its function is as follows. One of the primary rRNA binding proteins, it binds specifically to the 5'-end of 16S ribosomal RNA. This chain is Small ribosomal subunit protein uS17c (RPS17), found in Oryza sativa subsp. japonica (Rice).